We begin with the raw amino-acid sequence, 224 residues long: Menaquinol:cytochrome c reductase cytochrome b subunit (224 aa).

The chain crosses the membrane as a helical span at residues 37–57 (FSAFVYCFGGLTFFVTVIQIL). A heme b-binding site is contributed by Tyr-42. Cys-43 provides a ligand contact to heme c. Arg-91, His-94, His-108, and Arg-111 together coordinate heme b. 3 consecutive transmembrane segments (helical) span residues 96–116 (WGAS…FFQG), 126–146 (WIVG…GYLL), and 195–215 (IHVF…FLMI). Positions 196 and 211 each coordinate heme b. The heme c site is built by Arg-216 and Ile-220. Ser-221 is a binding site for heme b.

The protein belongs to the cytochrome b family. The main subunits of the menaquinol:cytochrome c complex are a Rieske-type iron-sulfur protein (QcrA), a cytochrome b (QcrB) and a cytochrome c (QcrC). Heme b is required as a cofactor. Heme c serves as cofactor.

It localises to the cell membrane. Its function is as follows. Component of the menaquinol:cytochrome c reductase complex. This is Menaquinol:cytochrome c reductase cytochrome b subunit (qcrB) from Geobacillus thermodenitrificans.